Here is a 52-residue protein sequence, read N- to C-terminus: Conotoxin Cal6.36 (52 aa).

The signal sequence occupies residues 1 to 22; it reads MKVTCVLTLAVLILTVGQMVTA. 3 cysteine pairs are disulfide-bonded: cysteine 24-cysteine 39, cysteine 31-cysteine 43, and cysteine 38-cysteine 47.

As to expression, expressed by the venom duct.

The protein localises to the secreted. In terms of biological role, probable neurotoxin. The polypeptide is Conotoxin Cal6.36 (Californiconus californicus (California cone)).